A 391-amino-acid chain; its full sequence is NADH-quinone oxidoreductase subunit D (391 aa).

This sequence belongs to the complex I 49 kDa subunit family. NDH-1 is composed of 14 different subunits. Subunits NuoB, C, D, E, F, and G constitute the peripheral sector of the complex.

Its subcellular location is the cell inner membrane. The enzyme catalyses a quinone + NADH + 5 H(+)(in) = a quinol + NAD(+) + 4 H(+)(out). Functionally, NDH-1 shuttles electrons from NADH, via FMN and iron-sulfur (Fe-S) centers, to quinones in the respiratory chain. The immediate electron acceptor for the enzyme in this species is believed to be ubiquinone. Couples the redox reaction to proton translocation (for every two electrons transferred, four hydrogen ions are translocated across the cytoplasmic membrane), and thus conserves the redox energy in a proton gradient. The sequence is that of NADH-quinone oxidoreductase subunit D from Rickettsia canadensis (strain McKiel).